A 201-amino-acid chain; its full sequence is FMN-dependent NADH:quinone oxidoreductase (201 aa).

FMN is bound by residues S10, 16-18 (SQS), 96-99 (MYNF), and 140-143 (SRGG).

The protein belongs to the azoreductase type 1 family. In terms of assembly, homodimer. The cofactor is FMN.

It catalyses the reaction 2 a quinone + NADH + H(+) = 2 a 1,4-benzosemiquinone + NAD(+). The catalysed reaction is N,N-dimethyl-1,4-phenylenediamine + anthranilate + 2 NAD(+) = 2-(4-dimethylaminophenyl)diazenylbenzoate + 2 NADH + 2 H(+). In terms of biological role, quinone reductase that provides resistance to thiol-specific stress caused by electrophilic quinones. Its function is as follows. Also exhibits azoreductase activity. Catalyzes the reductive cleavage of the azo bond in aromatic azo compounds to the corresponding amines. The sequence is that of FMN-dependent NADH:quinone oxidoreductase from Salmonella paratyphi A (strain ATCC 9150 / SARB42).